The primary structure comprises 151 residues: F-box protein GID2 (151 aa).

Residues Met-1–Thr-25 are compositionally biased toward basic and acidic residues. Positions Met-1–Glu-27 are disordered. The F-box domain occupies Glu-29–Ile-75.

In terms of assembly, part of some SCF(GID2) complex, which consist of SKP1B, CUL1 cullin, GID2/SLY1 and some RING box protein. Interacts directly with SKP1A and SKP1B. Interacts directly with DELLA proteins GAI, RGA, RGL1, RGL3 and probably RGL2. May have a higher affinity for phosphorylated DELLA proteins. As to expression, expressed in all tissues tested, including rosette leaves, green siliques, flowers, stems, cauline leaves and seedlings.

It is found in the nucleus. It participates in protein modification; protein ubiquitination. Its function is as follows. Essential component of the SCF-type E3 ligase complex, SCF(GID2), a complex that positively regulates the gibberellin signaling pathway. Upon gibberellin treatment, the SCF(GID2) complex mediates the ubiquitination and subsequent degradation of DELLA proteins (GAI, RGA and RGL2), some repressors of the gibberellin pathway, leading to activate the pathway. The protein is F-box protein GID2 (GID2) of Arabidopsis thaliana (Mouse-ear cress).